Consider the following 415-residue polypeptide: Dynein assembly factor with WD repeat domains 1 (415 aa).

WD repeat units lie at residues 90 to 129, 132 to 174, 175 to 214, 217 to 256, 259 to 298, 301 to 340, 343 to 384, and 386 to 415; these read AHIL…ELNT, GHRN…HTFR, GHTA…EVCT, GHSA…KVNI, GHCA…CVAT, GHDD…CIAK, GHEG…QVLE, and HTDE…RIWR.

It belongs to the WD repeat WDR69 family. Interacts with IFT46.

It is found in the cytoplasm. The protein localises to the cytoskeleton. Its subcellular location is the flagellum basal body. It localises to the flagellum axoneme. Required for axonemal dynein assembly and ciliary motility in ciliated organs, including Kupffer's vesicle, during embryogenesis. Facilitates the onset of robust cilia motility during development. This chain is Dynein assembly factor with WD repeat domains 1 (DAW1), found in Macaca fascicularis (Crab-eating macaque).